The chain runs to 344 residues: Zinc metalloproteinase nas-6 (344 aa).

The signal sequence occupies residues 1-19 (MLDHVLLLTYCLVSTVVRS). Positions 72–266 (NALKNKQLTW…VKINKLYSCK (195 aa)) constitute a Peptidase M12A domain. Intrachain disulfides connect Cys-114–Cys-265, Cys-135–Cys-154, Cys-300–Cys-334, Cys-307–Cys-327, and Cys-314–Cys-331. His-162 is a Zn(2+) binding site. The active site involves Glu-163. Zn(2+) contacts are provided by His-166 and His-172. The 35-residue stretch at 300-334 (CVDHFADCPHFAQYCTRASFFFVMKSYCPFTCKHC) folds into the ShKT domain.

Zn(2+) is required as a cofactor. Expressed in pharyngeal and body wall muscles, intestine, hypodermis and pharyngeal mc2 cells.

It is found in the secreted. Functionally, metalloprotease. This chain is Zinc metalloproteinase nas-6 (nas-6), found in Caenorhabditis elegans.